A 612-amino-acid chain; its full sequence is MSNSHPLRPFTAVGEIDHVHILSEHIGALLIGEEYGDVTFVVEKKHFPAHRVILAARCQYFRALLYGGMRESQPEAEIPLQDTTAEAFTMLLRYIYTGRATLTDEKEEVLLDFLSLAHKYGFPELEDSTSEYLCTILNIQNVCMTFDVASLYSLPKLTCMCCMFMDRNAQEVLASDGFLSLSKTALLNIVLRDSFAAPEKDIFLALLNWCKHNAKENHAEIMQAVRLPLMSLTELLNVVRPSGLLSPDAILDAIKVRSESRDMDLNYRGMLIPEENIATMKYGAQVVKGELKSALLDGDTQNYDLDHGFSRHPIDDDCRSGIEIKLGQPSIINHIRLLLWDRDSRSYSYFIEVSMDELDWIRVIDHSHYLCRSWQKLYFPARVCRYIRIVGTHNTVNKIFHIVAFECMFTNKAFTLEKGLIVPLENVATIADCASVIEGVSRSRNALLNGDTKNYDWDSGYTCHQLGSGAIVVQLAQPYIIGSIRLLLWDCDDRSYSYYVEVSTNQQQWTMVADRTKVSCKSWQSVTFERQPASFIRIVGTHNTANEVFHCVHFECPEQQSNQKEDSSEEPGTGDPSTPNQQLDPHAPRAPSASSLPPSPGPNSRSPNQQNQ.

The 69-residue stretch at 36–104 folds into the BTB domain; that stretch reads GDVTFVVEKK…IYTGRATLTD (69 aa). The BACK domain occupies 142–240; it reads VCMTFDVASL…SLTELLNVVR (99 aa). A disordered region spans residues 559–612; it reads QQSNQKEDSSEEPGTGDPSTPNQQLDPHAPRAPSASSLPPSPGPNSRSPNQQNQ. Positions 589–612 are enriched in low complexity; the sequence is RAPSASSLPPSPGPNSRSPNQQNQ.

As to expression, expressed in the brain (at protein level).

The polypeptide is BTB/POZ domain-containing protein 9 (Btbd9) (Mus musculus (Mouse)).